The following is a 1167-amino-acid chain: MSSAAADRRRAEAGTGSAAAAAAAAGEGDVGRFLAAAERMGLPGFSPSDLDTGPVSSVVTCLLALRDQFVSHDVGGLSCSLPEKVMMQSMEFPRKENDPGTQNSEGRRKIPKNPAMSEPSSPLSQTTLSSISRHAGHSFHDVFQLRQGRYSDLPSSKISEMMKSTSLDNAPTQSLLSVVNVILDELVETKIGEIPYHLACLLRKVILEIERRISTQAEHIRNQNNLMKAREEKYKSRIRVLEALASGTSDQTHVNSNATNGKAHVSPDHAVHQMKMEKDKTEDKKRLAEKDVVLLVKDKEEDVTRLTKDKEDMAKLLKDKEDIIRLMKEKEEMVWMMREKENMVSLNNGRVEDKHQLTDKDVANSAKYRNEIIKLMKEKEDSNDTIMKLNIELEAMKSSYEGTRILLDSKKKEVLQLLMDKESIEYIVSQLKQELAIERSSHQTHIQELETRAFQANNKLEQRIKEMELMLEDSKTRVRDLEELLESRSQIWEQKEIRLNQFIGLQIQNIQDLRLSSVSIRHEILHCQKRWSEEICDLGQSLKVLTNAAENYHATLEENRKLFNEVQELKGNIRVHCRIRPFLPGEDQTSTTIEYVGDNGELILANPAKRGKEGHKLFKFNKVLGPSASQDEVFKEIQPLIRSVLDGYNVCIFAYGQTGSGKTYTMTGPENATEKDWGVNYRALNDLFHISRSRRDTVMYKVSVQMIEIYNEQIHDLLGNSGSEKKLGILNASQPNGLAVPDATMHPVNSSSDVIELMRTGLENRSVGATALNERSSRSHSVVTMHIQGVDLKTGVTLRGALHLVDLAGSERVDRSAATGDRLKEAQHINKSLSALGDVIFSLSQKNAHVPYRNSKLTQVLQNSLGGNAKTLMFVQVNPDVSSYAETLSTLKFADRVSGVELGAAKANKEGKDIKEFKEQLSLLKDKIAKKDEEISRLQLQSHNTPRATAKRADSLLKHSSSSPGISSLGSKIQHRRTASGGRIKIVGSRAGSDVDNFSDISDRHSEAGSMQSVDDIQQSREIMGLSKLSMSEMGHNSVDPELPCFGYDDSEGRLSDISDSGLSMGAETDCSMSSVVELTSLPDQDRVSGTQKEQHMAPSTPKDRLHKVATRASRTTTPKTPQSPTLWPKLRDPPPPRSPISTSTGKVRVTQATSSSRNSSTQKRWT.

Residues 93 to 130 (PRKENDPGTQNSEGRRKIPKNPAMSEPSSPLSQTTLSS) form a disordered region. Low complexity predominate over residues 117-130 (SEPSSPLSQTTLSS). Coiled-coil stretches lie at residues 271–333 (VHQM…KEEM), 366–398 (AKYR…AMKS), and 432–489 (KQEL…ESRS). Positions 572–900 (NIRVHCRIRP…LKFADRVSGV (329 aa)) constitute a Kinesin motor domain. 656–663 (GQTGSGKT) contributes to the ATP binding site. A coiled-coil region spans residues 907–944 (ANKEGKDIKEFKEQLSLLKDKIAKKDEEISRLQLQSHN). Disordered stretches follow at residues 955–974 (SLLK…SKIQ) and 1083–1167 (PDQD…KRWT). The segment covering 958-972 (KHSSSSPGISSLGSK) has biased composition (low complexity). Composition is skewed to polar residues over residues 1113–1124 (ASRTTTPKTPQS) and 1151–1167 (TQAT…KRWT).

It belongs to the TRAFAC class myosin-kinesin ATPase superfamily. Kinesin family. KIN-14 subfamily.

The chain is Kinesin-like protein KIN-14M from Oryza sativa subsp. japonica (Rice).